The following is a 1233-amino-acid chain: Glutamate receptor ionotropic, NMDA 2C (1233 aa).

The N-terminal stretch at 1–19 is a signal peptide; the sequence is MGGALGPALLLTSLFGAWA. At 20 to 554 the chain is on the extracellular side; that stretch reads GLGPGQGEQG…SAFLEPYSPA (535 aa). Residues Asn70 and Asn73 are each glycosylated (N-linked (GlcNAc...) asparagine). An intrachain disulfide couples Cys82 to Cys317. Asn337 and Asn438 each carry an N-linked (GlcNAc...) asparagine glycan. Cystine bridges form between Cys426–Cys453 and Cys433–Cys454. L-glutamate is bound by residues Ser509, Thr511, and Arg516. Residue Asn539 is glycosylated (N-linked (GlcNAc...) asparagine). Residues 555–575 form a helical membrane-spanning segment; it reads VWVMMFVMCLTVVAITVFMFE. The Cytoplasmic segment spans residues 576–598; sequence YFSPVSYNQNLTRGKKSGGPAFT. The discontinuously helical intramembrane region spans 599 to 611; the sequence is IGKSVWLLWALVF. Positions 601–620 are pore-forming; that stretch reads KSVWLLWALVFNNSVPIENP. Over 612–626 the chain is Cytoplasmic; it reads NNSVPIENPRGTTSK. The chain crosses the membrane as a helical span at residues 627 to 644; the sequence is IMVLVWAFFAVIFLASYT. Over 645–813 the chain is Extracellular; the sequence is ANLAAFMIQE…EVMSSKLDID (169 aa). A glycan (N-linked (GlcNAc...) asparagine) is linked at Asn685. Positions 687, 688, and 729 each coordinate L-glutamate. A disulfide bridge connects residues Cys743 and Cys798. Residues 814–836 traverse the membrane as a helical segment; it reads NMAGVFYMLLVAMGLALLVFAWE. The Cytoplasmic portion of the chain corresponds to 837-1233; the sequence is HLVYWKLRHS…RRISSLESEV (397 aa). Ser875, Ser881, and Ser912 each carry phosphoserine. The disordered stretch occupies residues 920–994; it reads IENWGGGRRA…GPPLSDVSRV (75 aa). 2 stretches are compositionally biased toward pro residues: residues 929-956 and 975-987; these read APPP…PEPS and PQPP…PGPP. The PDZ-binding signature appears at 1231 to 1233; it reads SEV.

It belongs to the glutamate-gated ion channel (TC 1.A.10.1) family. NR2C/GRIN2C subfamily. In terms of assembly, heterotetramer. Forms heterotetrameric channels composed of two GluN1/zeta subunits (GRIN1), and two identical GluN2/epsilon subunits (GRIN2A, GRIN2B, GRIN2C or GRIN2D) or GluN3 subunits (GRIN3A or GRIN3B) (in vitro). In vivo, the subunit composition may depend on the expression levels of the different subunits. Interacts with PDZ domains of PATJ and DLG4. Interacts (via PDZ-binding motif) with SNX27 (via PDZ domain); the interaction is required for recycling to the plasma membrane when endocytosed and prevent degradation in lysosomes. In terms of tissue distribution, mainly expressed in brain with predominant expression is in the cerebellum, also present in the hippocampus, amygdala, caudate nucleus, corpus callosum, subthalamic nuclei and thalamus. Detected in the heart, skeletal muscle and pancreas.

The protein localises to the cell membrane. Its subcellular location is the postsynaptic cell membrane. The enzyme catalyses Ca(2+)(in) = Ca(2+)(out). It carries out the reaction Na(+)(in) = Na(+)(out). It catalyses the reaction K(+)(in) = K(+)(out). Functionally, component of N-methyl-D-aspartate (NMDA) receptors (NMDARs) that function as heterotetrameric, ligand-gated cation channels with high calcium permeability and voltage-dependent block by Mg(2+). Participates in synaptic plasticity for learning and memory formation by contributing to the slow phase of excitatory postsynaptic current and long-term synaptic potentiation. Channel activation requires binding of the neurotransmitter L-glutamate to the GluN2 subunit, glycine or D-serine binding to the GluN1 subunit, plus membrane depolarization to eliminate channel inhibition by Mg(2+). NMDARs mediate simultaneously the potasium efflux and the influx of calcium and sodium. Each GluN2 subunit confers differential attributes to channel properties, including activation, deactivation and desensitization kinetics, pH sensitivity, Ca2(+) permeability, and binding to allosteric modulators. The protein is Glutamate receptor ionotropic, NMDA 2C of Homo sapiens (Human).